The chain runs to 208 residues: Small ribosomal subunit protein uS4 (208 aa).

The S4 RNA-binding domain occupies 98 to 161 (QRLDNLVYRM…KNNPQILRAV (64 aa)).

This sequence belongs to the universal ribosomal protein uS4 family. As to quaternary structure, part of the 30S ribosomal subunit. Contacts protein S5. The interaction surface between S4 and S5 is involved in control of translational fidelity.

Its function is as follows. One of the primary rRNA binding proteins, it binds directly to 16S rRNA where it nucleates assembly of the body of the 30S subunit. Functionally, with S5 and S12 plays an important role in translational accuracy. This chain is Small ribosomal subunit protein uS4, found in Campylobacter hominis (strain ATCC BAA-381 / DSM 21671 / CCUG 45161 / LMG 19568 / NCTC 13146 / CH001A).